Consider the following 114-residue polypeptide: Fumarate reductase subunit D (114 aa).

The next 3 helical transmembrane spans lie at 24 to 44 (VSAIFLPVVILIIGLLLPFGL), 50 to 70 (LITFAYSWIGKLVILVLTIFP), and 92 to 112 (GGFIFYGLATIYTVWVLFAVI).

This sequence belongs to the FrdD family. Part of an enzyme complex containing four subunits: a flavoprotein (FrdA), an iron-sulfur protein (FrdB), and two hydrophobic anchor proteins (FrdC and FrdD).

It is found in the cell inner membrane. Its function is as follows. Anchors the catalytic components of the fumarate reductase complex to the cell membrane, binds quinones. This Haemophilus influenzae (strain PittGG) protein is Fumarate reductase subunit D.